We begin with the raw amino-acid sequence, 166 residues long: Probable calcium-binding protein CML17 (166 aa).

EF-hand domains are found at residues 12–47, 48–83, 91–126, and 127–162; these read EQIN…LGVK, PSPD…ELLS, YTEE…LGHA, and LTVA…AAFD. Ca(2+) is bound by residues aspartate 25, asparagine 27, aspartate 29, serine 31, and glutamate 36. The Ca(2+) site is built by aspartate 104, aspartate 106, asparagine 108, glutamate 115, aspartate 140, aspartate 142, aspartate 144, arginine 146, and glutamate 151.

Functionally, potential calcium sensor. The chain is Probable calcium-binding protein CML17 (CML17) from Arabidopsis thaliana (Mouse-ear cress).